A 721-amino-acid polypeptide reads, in one-letter code: Vacuolar transporter chaperone complex subunit 4 (721 aa).

One can recognise an SPX domain in the interval 1–146 (MKFGQLLKET…GWILKPVFAA (146 aa)). The Cytoplasmic portion of the chain corresponds to 1–631 (MKFGQLLKET…KTYFALERTY (631 aa)). ATP-binding residues include K198, R262, R264, K279, K292, Y357, and R359. E421 is a Mn(2+) binding site. K453 is an active-site residue. Composition is skewed to polar residues over residues 490–513 (QGRSQSGTHSSSVSANVLTDSENT) and 529–547 (IGSSSTRNDNSTFQTSDSF). The tract at residues 490–547 (QGRSQSGTHSSSVSANVLTDSENTPIHADGDNYVDEESRIGSSSTRNDNSTFQTSDSF) is disordered. Residue S495 is modified to Phosphoserine. At T497 the chain carries Phosphothreonine. Phosphoserine is present on S501. Residue T534 is modified to Phosphothreonine. S546 is modified (phosphoserine). A helical membrane pass occupies residues 632–652 (LDYLRYSILMGSIGITLFSFA). The Vacuolar portion of the chain corresponds to 653 to 657 (KTRSG). A helical membrane pass occupies residues 658-678 (ILGAASFTLVALFAIFYSTFL). The Cytoplasmic segment spans residues 679–697 (YLWRAVNIAKHNAVRYDDR). Residues 698–718 (FGPTAICVITFAAISANVILN) traverse the membrane as a helical segment. Over 719–721 (FNA) the chain is Vacuolar.

The protein belongs to the VTC4 family. In terms of assembly, the VTC core complex is an integral membrane heterooligomer composed of at least the catalytic subunit vtc4 and the accessory subunits vtc1 and vtc2. vtc1 is a small membrane protein without hydrophilic domain. Vtc2 and vtc4 are related and have 2 hydrophilic domains that face the cytosol, an N-terminal SPX domain and the central core domain. The central core in vtc4 is the catalytic domain. Mn(2+) is required as a cofactor.

Its subcellular location is the vacuole membrane. It carries out the reaction [phosphate](n) + ATP = [phosphate](n+1) + ADP. With respect to regulation, activity of the enzyme is Mn(2+)-dependent and enhanced in the presence of pyrophosphate (PPi). In terms of biological role, catalytic subunit of the vacuolar transporter chaperone (VTC) complex. The VTC complex acts as a vacuolar polyphosphate polymerase that catalyzes the synthesis of inorganic polyphosphate (polyP) via transfer of phosphate from ATP to a growing polyP chain, releasing ADP. VTC exposes its catalytic domain vtc4 to the cytosol, where the growing polyP chain winds through a tunnel-shaped pocket, integrating cytoplasmic polymer synthesis with polyP membrane translocation. The VTC complex carries 9 vacuolar transmembrane domains, which are likely to constitute the translocation channel into the organelle lumen. PolyP synthesis is tightly coupled to its transport into the vacuole lumen, in order to avoid otherwise toxic intermediates in the cytosol, and it depends on the proton gradient across the membrane, formed by V-ATPase. The VTC complex also plays a role in vacuolar membrane fusion. This is Vacuolar transporter chaperone complex subunit 4 (vtc4) from Schizosaccharomyces pombe (strain 972 / ATCC 24843) (Fission yeast).